The chain runs to 130 residues: Mediator of RNA polymerase II transcription subunit 10 (130 aa).

Belongs to the Mediator complex subunit 10 family. Component of the Mediator complex.

It is found in the nucleus. Its function is as follows. Component of the Mediator complex, a coactivator involved in the regulated transcription of nearly all RNA polymerase II-dependent genes. Mediator functions as a bridge to convey information from gene-specific regulatory proteins to the basal RNA polymerase II transcription machinery. Mediator is recruited to promoters by direct interactions with regulatory proteins and serves as a scaffold for the assembly of a functional preinitiation complex with RNA polymerase II and the general transcription factors. In Aedes aegypti (Yellowfever mosquito), this protein is Mediator of RNA polymerase II transcription subunit 10 (MED10).